Reading from the N-terminus, the 171-residue chain is Mitochondrial import inner membrane translocase subunit Tim17-A (171 aa).

Cys9 and Cys78 are joined by a disulfide. A run of 3 helical transmembrane segments spans residues 17–37 (CGGA…FKGF), 63–77 (GGSF…STID), and 113–133 (VGSA…GILL). The disordered stretch occupies residues 144–171 (GPQFTEDHSQLPSSQLPSSPFGDYRQYQ). A compositionally biased stretch (low complexity) spans 153 to 163 (QLPSSQLPSSP).

Belongs to the Tim17/Tim22/Tim23 family. In terms of assembly, component of the TIM23 complex at least composed of TIMM23, TIMM17 (TIMM17A or TIMM17B) and TIMM50. The complex interacts with the TIMM44 component of the PAM complex and with DNAJC15. Degraded by YMEL1 downstream of the integrated stress response (ISR).

It localises to the mitochondrion inner membrane. Functionally, essential component of the TIM23 complex, a complex that mediates the translocation of transit peptide-containing proteins across the mitochondrial inner membrane. The protein is Mitochondrial import inner membrane translocase subunit Tim17-A (Timm17a) of Mus musculus (Mouse).